The primary structure comprises 207 residues: High frequency lysogenization protein HflD homolog (207 aa).

The protein belongs to the HflD family.

It is found in the cytoplasm. The protein resides in the cell inner membrane. This Teredinibacter turnerae (strain ATCC 39867 / T7901) protein is High frequency lysogenization protein HflD homolog.